The sequence spans 540 residues: Chaperonin GroEL (540 aa).

Residues T30–P33, D87–T91, G415, and D496 contribute to the ATP site.

This sequence belongs to the chaperonin (HSP60) family. Forms a cylinder of 14 subunits composed of two heptameric rings stacked back-to-back. Interacts with the co-chaperonin GroES.

It is found in the cytoplasm. It carries out the reaction ATP + H2O + a folded polypeptide = ADP + phosphate + an unfolded polypeptide.. Together with its co-chaperonin GroES, plays an essential role in assisting protein folding. The GroEL-GroES system forms a nano-cage that allows encapsulation of the non-native substrate proteins and provides a physical environment optimized to promote and accelerate protein folding. This Symbiobacterium thermophilum (strain DSM 24528 / JCM 14929 / IAM 14863 / T) protein is Chaperonin GroEL.